The chain runs to 425 residues: 3-isopropylmalate dehydratase large subunit (425 aa).

Residues Cys305, Cys365, and Cys368 each coordinate [4Fe-4S] cluster.

It belongs to the aconitase/IPM isomerase family. LeuC type 2 subfamily. In terms of assembly, heterodimer of LeuC and LeuD. It depends on [4Fe-4S] cluster as a cofactor.

The enzyme catalyses (2R,3S)-3-isopropylmalate = (2S)-2-isopropylmalate. It functions in the pathway amino-acid biosynthesis; L-leucine biosynthesis; L-leucine from 3-methyl-2-oxobutanoate: step 2/4. In terms of biological role, catalyzes the isomerization between 2-isopropylmalate and 3-isopropylmalate, via the formation of 2-isopropylmaleate. In Clostridioides difficile (strain 630) (Peptoclostridium difficile), this protein is 3-isopropylmalate dehydratase large subunit.